The following is a 287-amino-acid chain: ATP synthase subunit a (287 aa).

Transmembrane regions (helical) follow at residues 37-57 (LDSV…MWLA), 96-116 (FIAP…AMDL), 149-169 (LGLS…IKGL), 187-207 (PVFA…EYVA), 224-244 (ELVF…LSGV), and 266-286 (TLQA…AHEA).

The protein belongs to the ATPase A chain family. As to quaternary structure, F-type ATPases have 2 components, CF(1) - the catalytic core - and CF(0) - the membrane proton channel. CF(1) has five subunits: alpha(3), beta(3), gamma(1), delta(1), epsilon(1). CF(0) has three main subunits: a(1), b(2) and c(9-12). The alpha and beta chains form an alternating ring which encloses part of the gamma chain. CF(1) is attached to CF(0) by a central stalk formed by the gamma and epsilon chains, while a peripheral stalk is formed by the delta and b chains.

The protein resides in the cell inner membrane. Its function is as follows. Key component of the proton channel; it plays a direct role in the translocation of protons across the membrane. The sequence is that of ATP synthase subunit a from Acidovorax sp. (strain JS42).